A 173-amino-acid polypeptide reads, in one-letter code: Ribonuclease H (173 aa).

The tract at residues 1–20 (MKATSKAKTHPPGATAAKDP) is disordered. In terms of domain architecture, RNase H type-1 spans 20-162 (PQKQVIIYTD…CDVLSKEAAG (143 aa)). Positions 29, 67, 89, and 154 each coordinate Mg(2+).

It belongs to the RNase H family. Monomer. Mg(2+) is required as a cofactor.

It is found in the cytoplasm. It catalyses the reaction Endonucleolytic cleavage to 5'-phosphomonoester.. Endonuclease that specifically degrades the RNA of RNA-DNA hybrids. The chain is Ribonuclease H from Syntrophus aciditrophicus (strain SB).